The following is a 426-amino-acid chain: Serine--tRNA ligase (426 aa).

233–235 provides a ligand contact to L-serine; sequence TSE. Residue 264–266 participates in ATP binding; that stretch reads RSE. Glu-287 lines the L-serine pocket. Residue 351–354 coordinates ATP; the sequence is EISS. Ser-387 provides a ligand contact to L-serine.

The protein belongs to the class-II aminoacyl-tRNA synthetase family. Type-1 seryl-tRNA synthetase subfamily. As to quaternary structure, homodimer. The tRNA molecule binds across the dimer.

The protein resides in the cytoplasm. The enzyme catalyses tRNA(Ser) + L-serine + ATP = L-seryl-tRNA(Ser) + AMP + diphosphate + H(+). It carries out the reaction tRNA(Sec) + L-serine + ATP = L-seryl-tRNA(Sec) + AMP + diphosphate + H(+). It participates in aminoacyl-tRNA biosynthesis; selenocysteinyl-tRNA(Sec) biosynthesis; L-seryl-tRNA(Sec) from L-serine and tRNA(Sec): step 1/1. Functionally, catalyzes the attachment of serine to tRNA(Ser). Is also able to aminoacylate tRNA(Sec) with serine, to form the misacylated tRNA L-seryl-tRNA(Sec), which will be further converted into selenocysteinyl-tRNA(Sec). This is Serine--tRNA ligase from Xylella fastidiosa (strain 9a5c).